The chain runs to 263 residues: Putative S-adenosyl-L-methionine-dependent methyltransferase Mkms_0098 (263 aa).

Residues Asp121 and 150–151 contribute to the S-adenosyl-L-methionine site; that span reads ES.

This sequence belongs to the UPF0677 family.

Exhibits S-adenosyl-L-methionine-dependent methyltransferase activity. The protein is Putative S-adenosyl-L-methionine-dependent methyltransferase Mkms_0098 of Mycobacterium sp. (strain KMS).